Here is a 347-residue protein sequence, read N- to C-terminus: F-box/LRR-repeat/kelch-repeat protein At2g27520 (347 aa).

The F-box domain occupies 1 to 50 (MVRLDLPWDLVDEILSRLPATSLGRLRFTCKRWNALFKDPEFITKQFHKA). LRR repeat units lie at residues 59 to 82 (LSNFGVYSMSTNLKEIPNNIEIAQ), 152 to 177 (CKLVEIFELKSNSWRVLSKVHPNVEK), 196 to 220 (KFNILSFDFTTETFRSVPLPFLYQD), and 261 to 285 (LSWSKSFTLEFDSLRDLPVMSILRI). A Kelch 1 repeat occupies 138-187 (KSYDSYKILRITYGCKLVEIFELKSNSWRVLSKVHPNVEKHYYGGVSFKG). A Kelch 2 repeat occupies 306 to 347 (MIYIVGKNGFKKLSYEKDRSNLWRLPFFFSYVPSLVGLYPPM).

The protein is F-box/LRR-repeat/kelch-repeat protein At2g27520 of Arabidopsis thaliana (Mouse-ear cress).